Reading from the N-terminus, the 506-residue chain is BTB/POZ domain and ankyrin repeat-containing protein NPR5 (506 aa).

One can recognise a BTB domain in the interval 23-131; the sequence is SDVTFSVEGR…LYSGQVSLVP (109 aa). The C2HC NPR-type zinc finger occupies 137–151; sequence RPGCGERGCWHTHCA. Cys-140, Cys-145, His-147, and Cys-150 together coordinate Zn(2+). ANK repeat units lie at residues 278 to 306, 307 to 337, 342 to 371, and 375 to 409; these read HKIRRMRRALDSSDVELVKLMVMGEGLNL, DDALALHYAVENCSREVVKALLELGAADVNH, AGKTPLHVAAEMVCPDMVAVLLDHHADPNV, and DGVTPLDILRTLTSDFLFKGAVPGLAHIEPNKLRL. A disordered region spans residues 481-506; it reads KMNDGGDGDDGGSRGPSSLFSPHGFP.

Belongs to the plant 'ANKYRIN-BTB/POZ' family. 'NOOT-BOP-COCH-like' (NBCL) subfamily. In terms of assembly, homodimer. Interacts with TGAL5, TGAL7, TGAL8 and TGAL11.

Its subcellular location is the nucleus. The protein localises to the cytoplasm. Its pathway is protein modification; protein ubiquitination. In terms of biological role, may act as a substrate-specific adapter of an E3 ubiquitin-protein ligase complex (CUL3-RBX1-BTB) which mediates the ubiquitination and subsequent proteasomal degradation of target proteins. Transcriptional co-regulator involved in the promotion of leaf and floral meristem fate and determinacy. Required for the abscission of senescent organs, probably by regulating the cell wall disorganization in abscission zones (AZs, e.g. pulvini at the base of leaves). Maybe involved in defense response against pathogens. This is BTB/POZ domain and ankyrin repeat-containing protein NPR5 from Oryza sativa subsp. japonica (Rice).